The chain runs to 914 residues: Trafficking kinesin-binding protein 2 (914 aa).

The segment covering 1 to 21 (MSQSQNAIFTSPTGEENLMNS) has biased composition (polar residues). Residues 1–30 (MSQSQNAIFTSPTGEENLMNSNHRDSESIT) are disordered. The HAP1 N-terminal domain occupies 48-353 (EEQLPQYRLK…QEEIKELRSR (306 aa)). Residues 134–354 (QALLKRNHVL…EEIKELRSRS (221 aa)) adopt a coiled-coil conformation. The interval 359–509 (HLYFSQSYGA…KQFFAEEWQR (151 aa)) is interaction with HGS. Ser420 bears the Phosphoserine mark. Disordered stretches follow at residues 447-482 (QQTEDKSLLNQGSSSEEVAGSSQKMGQPGPSGDSDL) and 765-787 (QPLPKSLAIPSTPPNSPSHSPCP). Residues 454-471 (LLNQGSSSEEVAGSSQKM) show a composition bias toward polar residues. Positions 775 to 787 (STPPNSPSHSPCP) are enriched in pro residues.

The protein belongs to the milton family. In terms of assembly, interacts with GABA-A receptor and O-GlcNAc transferase. Interacts with HGS. Interacts with RHOT1/Miro-1 and RHOT2/Miro-2. Post-translationally, O-glycosylated. Widely expressed, with highest expression in heart.

The protein localises to the cytoplasm. It is found in the early endosome. It localises to the mitochondrion. May regulate endosome-to-lysosome trafficking of membrane cargo, including EGFR. The chain is Trafficking kinesin-binding protein 2 (TRAK2) from Homo sapiens (Human).